The primary structure comprises 88 residues: uncharacterized protein (88 aa).

The chain crosses the membrane as a helical span at residues 34-54 (IIIAVILIFFLTIVGLFYLII).

It localises to the membrane. This is an uncharacterized protein from Ureaplasma parvum serovar 3 (strain ATCC 700970).